The sequence spans 357 residues: Phospho-N-acetylmuramoyl-pentapeptide-transferase (357 aa).

Helical transmembrane passes span 4–24 (QILF…PLLI), 52–72 (TMGG…SKVI), 77–97 (PTFS…VGFL), 115–135 (AKMA…LQFA), 153–173 (FGWT…ILAM), 186–206 (LATG…VWQF), 228–248 (PLDL…FLWW), 255–275 (IFMG…LAIC), 280–300 (LLVA…VIQV), and 334–354 (FWII…AGWA).

It belongs to the glycosyltransferase 4 family. MraY subfamily. It depends on Mg(2+) as a cofactor.

It is found in the cell membrane. It carries out the reaction UDP-N-acetyl-alpha-D-muramoyl-L-alanyl-gamma-D-glutamyl-meso-2,6-diaminopimeloyl-D-alanyl-D-alanine + di-trans,octa-cis-undecaprenyl phosphate = di-trans,octa-cis-undecaprenyl diphospho-N-acetyl-alpha-D-muramoyl-L-alanyl-D-glutamyl-meso-2,6-diaminopimeloyl-D-alanyl-D-alanine + UMP. It functions in the pathway cell wall biogenesis; peptidoglycan biosynthesis. Catalyzes the initial step of the lipid cycle reactions in the biosynthesis of the cell wall peptidoglycan: transfers peptidoglycan precursor phospho-MurNAc-pentapeptide from UDP-MurNAc-pentapeptide onto the lipid carrier undecaprenyl phosphate, yielding undecaprenyl-pyrophosphoryl-MurNAc-pentapeptide, known as lipid I. In Streptomyces avermitilis (strain ATCC 31267 / DSM 46492 / JCM 5070 / NBRC 14893 / NCIMB 12804 / NRRL 8165 / MA-4680), this protein is Phospho-N-acetylmuramoyl-pentapeptide-transferase.